A 466-amino-acid polypeptide reads, in one-letter code: MPHSWDYDAVVIGSGPGGEGAAMGLVKQGARVAVIERYHNVGGGCTHWGTIPSKALRHAVSRIIEFNQNPLYSDHSRLLRSSFADILNHADNVINQQTRMRQGFYERNHCEILQGNAHFIDEHTLALECHDGTVETLTAEKFVIACGSRPYHPNDVDFSHPRIYDSDSILSLHHEPRHVIIYGAGVIGCEYASIFRGMDVKVDLINTRDRLLAFLDQEMSDSLSYHFWNSGVVIRHNEEYEKIEGCDDGVIMHLKSGKKLKADCLLYANGRTGNTDSLALENIGLETDSRGQLKVNSMYQTALPHVYAVGDVIGYPSLASAAYDQGRIAAQALVKGEATAHLIEDIPTGIYTIPEISSVGKTEQQLTAMKVPYEVGRAQFKHLARAQIVGMNVGTLKILFHRETKEILGIHCFGERAAEIIHIGQAIMEQKGGGNTIEYFVNTTFNYPTMAEAYRVAALNGLNRLF.

36–45 (ERYHNVGGGC) lines the FAD pocket.

This sequence belongs to the class-I pyridine nucleotide-disulfide oxidoreductase family. FAD is required as a cofactor.

It localises to the cytoplasm. It catalyses the reaction NAD(+) + NADPH = NADH + NADP(+). Functionally, conversion of NADPH, generated by peripheral catabolic pathways, to NADH, which can enter the respiratory chain for energy generation. The sequence is that of Soluble pyridine nucleotide transhydrogenase from Salmonella paratyphi A (strain ATCC 9150 / SARB42).